Consider the following 697-residue polypeptide: Heat shock protein homolog SSE1 (697 aa).

Residues 664–674 are compositionally biased toward low complexity; that stretch reads EMAEKLAAQRA. The tract at residues 664-697 is disordered; the sequence is EMAEKLAAQRAAEQKAQESKAESDKDAEGDIDLD. Over residues 675–691 the composition is skewed to basic and acidic residues; sequence AEQKAQESKAESDKDAE.

Belongs to the heat shock protein 70 family.

The protein resides in the cytoplasm. This Eremothecium gossypii (strain ATCC 10895 / CBS 109.51 / FGSC 9923 / NRRL Y-1056) (Yeast) protein is Heat shock protein homolog SSE1 (SSE1).